We begin with the raw amino-acid sequence, 497 residues long: Aspartyl/glutamyl-tRNA(Asn/Gln) amidotransferase subunit B (497 aa).

The protein belongs to the GatB/GatE family. GatB subfamily. As to quaternary structure, heterotrimer of A, B and C subunits.

The catalysed reaction is L-glutamyl-tRNA(Gln) + L-glutamine + ATP + H2O = L-glutaminyl-tRNA(Gln) + L-glutamate + ADP + phosphate + H(+). It carries out the reaction L-aspartyl-tRNA(Asn) + L-glutamine + ATP + H2O = L-asparaginyl-tRNA(Asn) + L-glutamate + ADP + phosphate + 2 H(+). In terms of biological role, allows the formation of correctly charged Asn-tRNA(Asn) or Gln-tRNA(Gln) through the transamidation of misacylated Asp-tRNA(Asn) or Glu-tRNA(Gln) in organisms which lack either or both of asparaginyl-tRNA or glutaminyl-tRNA synthetases. The reaction takes place in the presence of glutamine and ATP through an activated phospho-Asp-tRNA(Asn) or phospho-Glu-tRNA(Gln). This chain is Aspartyl/glutamyl-tRNA(Asn/Gln) amidotransferase subunit B, found in Cutibacterium acnes (strain DSM 16379 / KPA171202) (Propionibacterium acnes).